The chain runs to 140 residues: Large ribosomal subunit protein uL11 (140 aa).

It belongs to the universal ribosomal protein uL11 family. As to quaternary structure, part of the ribosomal stalk of the 50S ribosomal subunit. Interacts with L10 and the large rRNA to form the base of the stalk. L10 forms an elongated spine to which L12 dimers bind in a sequential fashion forming a multimeric L10(L12)X complex. One or more lysine residues are methylated.

Functionally, forms part of the ribosomal stalk which helps the ribosome interact with GTP-bound translation factors. This is Large ribosomal subunit protein uL11 from Staphylococcus aureus (strain Mu3 / ATCC 700698).